A 381-amino-acid polypeptide reads, in one-letter code: MESIGIVAPQTMHFAEPLRLQSGSVIGNYQLVVETYGELNAARSNAVLVCHALNASHHVAGVYADDPRSTGWWDNMVGPGKPLDTNRFFVIGVNNLGSCFGSTGPMSADPSTGKPYGASFPVVTVEDWVHAQARVADAFGIERFAAVMGGSLGGMQALAWSLMYPERVAHCIDIASTPKLSAQNIAFNEVARSAILSDPDFHGGDYYAHGVKPKRGLRVARMIGHITYLSDDDMAEKFGRALRRADGALDAYNFSFDVEFEVESYLRYQGDKFADYFDANTYLLITRALDYFDPAKAFDGNLTAALAHTQAKYLIASFSTDWRFAPARSREIVKALLDNKRTVSYAEIDAPHGHDAFLLDDARYHNLIRAYYERIANEVGA.

The AB hydrolase-1 domain maps to 45 to 360 (NAVLVCHALN…PHGHDAFLLD (316 aa)). The active-site Nucleophile is the Ser151. Arg221 serves as a coordination point for substrate. Active-site residues include Asp321 and His354. Residue Asp355 coordinates substrate.

This sequence belongs to the AB hydrolase superfamily. MetX family. Homodimer.

Its subcellular location is the cytoplasm. The catalysed reaction is L-homoserine + succinyl-CoA = O-succinyl-L-homoserine + CoA. Its pathway is amino-acid biosynthesis; L-methionine biosynthesis via de novo pathway; O-succinyl-L-homoserine from L-homoserine: step 1/1. Its function is as follows. Transfers a succinyl group from succinyl-CoA to L-homoserine, forming succinyl-L-homoserine. The polypeptide is Homoserine O-succinyltransferase (Burkholderia lata (strain ATCC 17760 / DSM 23089 / LMG 22485 / NCIMB 9086 / R18194 / 383)).